The chain runs to 432 residues: MLDIQLLRKDIDGVAKRLADRGYILDVAAFSALEAERRAIQTRTEELQAKRNSLSKQIGAMKGRGEDTSAVMAEVGGIGDEMKASAVQLEDIQKRLSDLLLGVPNLAHESVPVGNDEAGNVEVRRWGTPRQFDFEIKDHVDVGTPLGLDFETGAKLSGARFTLLRGQIARLHRALAQFMIDTHTQQHGYTEVYTPYIVNPEILFGTGQLPKFADDMFRVEKGGGENTVTQYLISTSEISLTNTVRDSIVDSNELPIKLTAHSPCFRSEAGSYGRDTRGMIRQHQFDKVEMVQIVSPDTSYDALEQMVAHAEVILQKLELPYRVITLCTGDMGFSAAKTYDLEVWVPAQNTYREISSCSNTEAFQARRMQARFRNAQGKPELVHTLNGSGLAVGRTLVAVLENFQNADGSVTVPAALRPYLGGVDRLEVKASA.

L-serine is bound at residue 235 to 237 (TSE). 266–268 (RSE) is a binding site for ATP. Position 289 (Glu-289) interacts with L-serine. 353–356 (EISS) contributes to the ATP binding site. An L-serine-binding site is contributed by Ser-388.

It belongs to the class-II aminoacyl-tRNA synthetase family. Type-1 seryl-tRNA synthetase subfamily. As to quaternary structure, homodimer. The tRNA molecule binds across the dimer.

It localises to the cytoplasm. It catalyses the reaction tRNA(Ser) + L-serine + ATP = L-seryl-tRNA(Ser) + AMP + diphosphate + H(+). It carries out the reaction tRNA(Sec) + L-serine + ATP = L-seryl-tRNA(Sec) + AMP + diphosphate + H(+). Its pathway is aminoacyl-tRNA biosynthesis; selenocysteinyl-tRNA(Sec) biosynthesis; L-seryl-tRNA(Sec) from L-serine and tRNA(Sec): step 1/1. Catalyzes the attachment of serine to tRNA(Ser). Is also able to aminoacylate tRNA(Sec) with serine, to form the misacylated tRNA L-seryl-tRNA(Sec), which will be further converted into selenocysteinyl-tRNA(Sec). In Paraburkholderia phymatum (strain DSM 17167 / CIP 108236 / LMG 21445 / STM815) (Burkholderia phymatum), this protein is Serine--tRNA ligase.